Consider the following 786-residue polypeptide: LPS-assembly protein LptD (786 aa).

An N-terminal signal peptide occupies residues 1-24 (MKKRIPTLLATMIASALYSHQGLA). 2 disulfide bridges follow: cysteine 31-cysteine 726 and cysteine 173-cysteine 727.

This sequence belongs to the LptD family. Component of the lipopolysaccharide transport and assembly complex. Interacts with LptE and LptA. Post-translationally, contains two intramolecular disulfide bonds.

The protein localises to the cell outer membrane. Its function is as follows. Together with LptE, is involved in the assembly of lipopolysaccharide (LPS) at the surface of the outer membrane. The protein is LPS-assembly protein LptD of Salmonella typhimurium (strain LT2 / SGSC1412 / ATCC 700720).